A 257-amino-acid chain; its full sequence is Flap endonuclease Xni (257 aa).

Residue aspartate 109 participates in Mg(2+) binding. A 5'-3' exonuclease domain is found at 165 to 255 (LKPEQLADYW…FNLQDIRYEK (91 aa)). Positions 176, 177, 187, and 190 each coordinate K(+). The tract at residues 189–194 (GIGPKA) is interaction with DNA.

The protein belongs to the Xni family. The cofactor is Mg(2+). K(+) serves as cofactor.

Functionally, has flap endonuclease activity. During DNA replication, flap endonucleases cleave the 5'-overhanging flap structure that is generated by displacement synthesis when DNA polymerase encounters the 5'-end of a downstream Okazaki fragment. This Aliivibrio salmonicida (strain LFI1238) (Vibrio salmonicida (strain LFI1238)) protein is Flap endonuclease Xni.